We begin with the raw amino-acid sequence, 258 residues long: Trans-aconitate 2-methyltransferase (258 aa).

The protein belongs to the methyltransferase superfamily. Tam family.

Its subcellular location is the cytoplasm. The catalysed reaction is trans-aconitate + S-adenosyl-L-methionine = (E)-3-(methoxycarbonyl)pent-2-enedioate + S-adenosyl-L-homocysteine. Catalyzes the S-adenosylmethionine monomethyl esterification of trans-aconitate. The protein is Trans-aconitate 2-methyltransferase of Methylobacterium nodulans (strain LMG 21967 / CNCM I-2342 / ORS 2060).